We begin with the raw amino-acid sequence, 349 residues long: Putative nuclease HARBI1 (349 aa).

The DDE Tnp4 domain occupies Val148–Asn300. 4 residues coordinate a divalent metal cation: Asp149, Asp199, Asp225, and Glu261.

It belongs to the HARBI1 family. As to quaternary structure, interacts with NAIF1. A divalent metal cation serves as cofactor. As to expression, detected in brain.

It localises to the nucleus. The protein localises to the cytoplasm. Transposase-derived protein that may have nuclease activity (Potential). Does not have transposase activity. This is Putative nuclease HARBI1 (HARBI1) from Bos taurus (Bovine).